Reading from the N-terminus, the 130-residue chain is Small ribosomal subunit protein uS11 (130 aa).

It belongs to the universal ribosomal protein uS11 family. In terms of assembly, part of the 30S ribosomal subunit. Interacts with proteins S7 and S18. Binds to IF-3.

Located on the platform of the 30S subunit, it bridges several disparate RNA helices of the 16S rRNA. Forms part of the Shine-Dalgarno cleft in the 70S ribosome. The sequence is that of Small ribosomal subunit protein uS11 from Acidiphilium cryptum (strain JF-5).